We begin with the raw amino-acid sequence, 409 residues long: MNVSAIVVEYNPMHNGHLHHIKKTKELTNCDALVCIMSGNFVQRGFPSILDKWTKASIAISNGVDLVIELPTLYSLSSAEFFSFGAVSILDSLNIINSICFGSEIGNINALQDIASTLLEEPLEYKILLKNYLDKGISFAKARNLALVELNRDNKIMSENINKILSLSNNILGIEYLKSLLLLNSSIKPFTITREGADYKDENLHKEYSSASSIRKYLKENKNINILKDFLPLEGFLEFKRLITKGYNFSMEDSMINYIRYKYISGYKNLHNLIDVSEGLDNRIYKSLEKNFTYDSLVGEIKSKRYAYSRIGRILCQYFIGFENYDLNSLLKSTPNYMRVLASNEIGLKVLKKIKRHSSTNIYTKIPKNTNTLLNLDIKATNAYSLLNNNIRFNEDYFRSPIIIKNTIY.

ATP is bound by residues 7–20 (VVEY…HLHH), glycine 102, asparagine 169, and arginine 194.

The protein belongs to the TmcAL family.

The protein resides in the cytoplasm. It catalyses the reaction cytidine(34) in elongator tRNA(Met) + acetate + ATP = N(4)-acetylcytidine(34) in elongator tRNA(Met) + AMP + diphosphate. In terms of biological role, catalyzes the formation of N(4)-acetylcytidine (ac(4)C) at the wobble position of elongator tRNA(Met), using acetate and ATP as substrates. First activates an acetate ion to form acetyladenylate (Ac-AMP) and then transfers the acetyl group to tRNA to form ac(4)C34. The chain is tRNA(Met) cytidine acetate ligase from Clostridium botulinum (strain Loch Maree / Type A3).